We begin with the raw amino-acid sequence, 857 residues long: Leucine--tRNA ligase (857 aa).

Positions 42–52 (PYPSGNLHMGH) match the 'HIGH' region motif. The 'KMSKS' region motif lies at 615–619 (KMSKS). An ATP-binding site is contributed by Lys-618.

The protein belongs to the class-I aminoacyl-tRNA synthetase family.

It is found in the cytoplasm. The catalysed reaction is tRNA(Leu) + L-leucine + ATP = L-leucyl-tRNA(Leu) + AMP + diphosphate. This Thermosynechococcus vestitus (strain NIES-2133 / IAM M-273 / BP-1) protein is Leucine--tRNA ligase.